A 390-amino-acid polypeptide reads, in one-letter code: Stearoyl-[acyl-carrier-protein] 9-desaturase, chloroplastic (390 aa).

The transit peptide at M1 to M27 directs the protein to the chloroplast. Positions 132, 170, 173, 223, 256, and 259 each coordinate Fe cation.

Belongs to the fatty acid desaturase type 2 family. In terms of assembly, homodimer. Fe(2+) serves as cofactor.

It is found in the plastid. Its subcellular location is the chloroplast. It catalyses the reaction octadecanoyl-[ACP] + 2 reduced [2Fe-2S]-[ferredoxin] + O2 + 2 H(+) = (9Z)-octadecenoyl-[ACP] + 2 oxidized [2Fe-2S]-[ferredoxin] + 2 H2O. It functions in the pathway lipid metabolism; fatty acid metabolism. Its function is as follows. Converts stearoyl-ACP to oleoyl-ACP by introduction of a cis double bond between carbons 9 and 10 of the acyl chain. The protein is Stearoyl-[acyl-carrier-protein] 9-desaturase, chloroplastic of Olea europaea (Common olive).